The sequence spans 1042 residues: Sarcoplasmic/endoplasmic reticulum calcium ATPase 2 (1042 aa).

Over 1 to 48 (MENAHTKTVEEVLGHFGVNESTGLSLEQVKKLKERWGSNELPAEEGKT) the chain is Cytoplasmic. Serine 38 carries the phosphoserine modification. A helical membrane pass occupies residues 49–69 (LLELVIEQFEDLLVRILLLAA). Residues 70 to 89 (CISFVLAWFEEGEETITAFV) are Lumenal-facing. Residues 90–110 (EPFVILLILVANAIVGVWQER) form a helical membrane-spanning segment. The Cytoplasmic portion of the chain corresponds to 111–253 (NAENAIEALK…QERTPLQQKL (143 aa)). Residues 254 to 273 (DEFGEQLSKVISLICIAVWI) traverse the membrane as a helical segment. Over 274 to 295 (INIGHFNDPVHGGSWIRGAIYY) the chain is Lumenal. Residues tyrosine 294 and tyrosine 295 each carry the 3'-nitrotyrosine modification. Residues 296–313 (FKIAVALAVAAIPEGLPA) form a helical membrane-spanning segment. Residues valine 304, alanine 305, isoleucine 307, and glutamate 309 each coordinate Ca(2+). Topologically, residues 314–756 (VITTCLALGT…EEGRAIYNNM (443 aa)) are cytoplasmic. Catalysis depends on aspartate 351, which acts as the 4-aspartylphosphate intermediate. Positions 351 and 353 each coordinate Mg(2+). An ATP-binding site is contributed by threonine 353. A Phosphothreonine modification is found at threonine 441. Residues glutamate 442, arginine 489, and lysine 514 each contribute to the ATP site. A Phosphoserine modification is found at serine 531. Residue arginine 559 participates in ATP binding. Residues 575 to 594 (MHLKDSANFIKYETNLTFVG) are interaction with HAX1. Serine 580 is modified (phosphoserine). ATP-binding residues include threonine 624, glycine 625, and aspartate 626. Serine 663 carries the post-translational modification Phosphoserine. Residues arginine 677 and lysine 683 each coordinate ATP. Mg(2+) is bound at residue aspartate 702. Asparagine 705 provides a ligand contact to ATP. A helical membrane pass occupies residues 757–776 (KQFIRYLISSNVGEVVCIFL). The Ca(2+) site is built by asparagine 767 and glutamate 770. The Lumenal segment spans residues 777-786 (TAALGFPEAL). The chain crosses the membrane as a helical span at residues 787-807 (IPVQLLWVNLVTDGLPATALG). The interaction with PLN stretch occupies residues 787–807 (IPVQLLWVNLVTDGLPATALG). The segment at 788–1042 (PVQLLWVNLV…DTNFSDLLWS (255 aa)) is interaction with TMEM64 and PDIA3. Asparagine 795, threonine 798, and aspartate 799 together coordinate Ca(2+). Residues 808 to 827 (FNPPDLDIMNKPPRNPKEPL) lie on the Cytoplasmic side of the membrane. Residues 828–850 (ISGWLFFRYLAIGCYVGAATVGA) traverse the membrane as a helical segment. Residues 851–896 (AAWWFIAADGGPRVSFYQLSHFLQCKEDNPDFEGVDCAIFESPYPM) are Lumenal-facing. Cysteine 875 and cysteine 887 are disulfide-bonded. The chain crosses the membrane as a helical span at residues 897–916 (TMALSVLVTIEMCNALNSLS). A Ca(2+)-binding site is contributed by glutamate 907. Topologically, residues 917 to 929 (ENQSLLRMPPWEN) are cytoplasmic. The helical transmembrane segment at 930–948 (IWLVGSICLSMSLHFLILY) threads the bilayer. Positions 931 to 942 (WLVGSICLSMSL) are interaction with PLN. At 949-963 (VEPLPLIFQITPLNV) the chain is on the lumenal side. A helical transmembrane segment spans residues 964–984 (TQWLMVLKISLPVILMDETLK). The Cytoplasmic segment spans residues 985–1042 (FVARNYLEPGKECVQPAPQSCSLWACTEGVSWPFVLLIVPLVMWVYSTDTNFSDLLWS).

The protein belongs to the cation transport ATPase (P-type) (TC 3.A.3) family. Type IIA subfamily. Interacts with sarcolipin (SLN); the interaction inhibits ATP2A2 Ca(2+) affinity. Interacts with phospholamban (PLN); the interaction inhibits ATP2A2 Ca(2+) affinity. Interacts with myoregulin (MRLN). Interacts with ARLN and ERLN; the interactions inhibit ATP2A2 Ca(2+) affinity. Interacts with SRTIT1/DWORF; the interaction results in activation of ATP2A2. Interacts with the monomeric forms of SLN, PLN, ARLN, ERLN and STRI1/DWORF. Interacts with HAX1. Interacts with S100A8 and S100A9. Interacts with SLC35G1 and STIM1. Interacts with TMEM203. Interacts with TMEM64 and PDIA3. Interacts with TMX1. Interacts with TMX2. Interacts with VMP1; VMP1 competes with PLN and SLN to prevent them from forming an inhibitory complex with ATP2A2. Interacts with ULK1. Interacts with TUNAR. Interacts with FLVCR2; this interaction occurs in the absence of heme and promotes ATP2A2 proteasomal degradation; this complex is dissociated upon heme binding. Interacts with FNIP1. In terms of assembly, interacts with TRAM2 (via C-terminus). It depends on Mg(2+) as a cofactor. In terms of processing, nitrated under oxidative stress. Nitration on the two tyrosine residues inhibits catalytic activity. Post-translationally, serotonylated on Gln residues by TGM2 in response to hypoxia, leading to its inactivation. Isoform 2 is highly expressed in heart and slow twitch skeletal muscle. Isoform 1 is widely expressed.

It localises to the endoplasmic reticulum membrane. Its subcellular location is the sarcoplasmic reticulum membrane. It catalyses the reaction Ca(2+)(in) + ATP + H2O = Ca(2+)(out) + ADP + phosphate + H(+). Its activity is regulated as follows. Has different conformational states with differential Ca2+ affinity. The E1 conformational state (active form) shows high Ca(2+) affinity, while the E2 state exhibits low Ca(2+) affinity. Binding of ATP allosterically increases its affinity for subsequent binding of Ca2+. Reversibly inhibited by phospholamban (PLN) at low calcium concentrations. PLN inhibits ATP2A2 Ca(2+) affinity by disrupting its allosteric activation by ATP. Inhibited by sarcolipin (SLN) and myoregulin (MRLN). The inhibition is blocked by VMP1. Enhanced by STRIT1/DWORF; STRIT1 increases activity by displacing sarcolipin (SLN), phospholamban (PLN) and myoregulin (MRLN). Stabilizes SERCA2 in its E2 state. This magnesium-dependent enzyme catalyzes the hydrolysis of ATP coupled with the translocation of calcium from the cytosol to the sarcoplasmic reticulum lumen. Involved in autophagy in response to starvation. Upon interaction with VMP1 and activation, controls ER-isolation membrane contacts for autophagosome formation. Also modulates ER contacts with lipid droplets, mitochondria and endosomes. In coordination with FLVCR2 mediates heme-stimulated switching from mitochondrial ATP synthesis to thermogenesis. Functionally, involved in the regulation of the contraction/relaxation cycle. Acts as a regulator of TNFSF11-mediated Ca(2+) signaling pathways via its interaction with TMEM64 which is critical for the TNFSF11-induced CREB1 activation and mitochondrial ROS generation necessary for proper osteoclast generation. Association between TMEM64 and SERCA2 in the ER leads to cytosolic Ca(2+) spiking for activation of NFATC1 and production of mitochondrial ROS, thereby triggering Ca(2+) signaling cascades that promote osteoclast differentiation and activation. The polypeptide is Sarcoplasmic/endoplasmic reticulum calcium ATPase 2 (ATP2A2) (Oryctolagus cuniculus (Rabbit)).